Reading from the N-terminus, the 368-residue chain is Putative zinc metalloprotease Cj1068 (368 aa).

Histidine 36 lines the Zn(2+) pocket. Glutamate 37 is an active-site residue. Histidine 40 is a Zn(2+) binding site. The next 3 membrane-spanning stretches (helical) occupy residues isoleucine 112–glycine 134, phenylalanine 291–isoleucine 313, and threonine 338–asparagine 360. The region spanning alanine 126–lysine 197 is the PDZ domain.

The protein belongs to the peptidase M50B family. Requires Zn(2+) as cofactor.

It is found in the cell inner membrane. This is Putative zinc metalloprotease Cj1068 from Campylobacter jejuni subsp. jejuni serotype O:2 (strain ATCC 700819 / NCTC 11168).